Consider the following 215-residue polypeptide: Interleukin-12 subunit alpha (215 aa).

The first 22 residues, 1–22 (MCQSRYLLFLATLVLLNHLTSA), serve as a signal peptide directing secretion. Disulfide bonds link C33-C106, C60-C192, and C81-C119. Residues N35, N89, and N167 are each glycosylated (N-linked (GlcNAc...) asparagine).

The protein belongs to the IL-6 superfamily. As to quaternary structure, heterodimer with IL12B; disulfide-linked. This heterodimer is known as interleukin IL-12. Heterodimer with EBI3/IL27B; not disulfide-linked. This heterodimer is known as interleukin IL-35. Interacts with NBR1; this interaction promotes IL-12 secretion.

Its subcellular location is the secreted. Its function is as follows. Heterodimerizes with IL12B to form the IL-12 cytokine or with EBI3/IL27B to form the IL-35 cytokine. IL-12 is primarily produced by professional antigen-presenting cells (APCs) such as B-cells and dendritic cells (DCs) as well as macrophages and granulocytes and regulates T-cell and natural killer-cell responses, induces the production of interferon-gamma (IFN-gamma), favors the differentiation of T-helper 1 (Th1) cells and is an important link between innate resistance and adaptive immunity. Mechanistically, exerts its biological effects through a receptor composed of IL12R1 and IL12R2 subunits. Binding to the receptor results in the rapid tyrosine phosphorylation of a number of cellular substrates including the JAK family kinases TYK2 and JAK2. In turn, recruited STAT4 gets phosphorylated and translocates to the nucleus where it regulates cytokine/growth factor responsive genes. As part of IL-35, plays essential roles in maintaining the immune homeostasis of the liver microenvironment and also functions as an immune-suppressive cytokine. Mediates biological events through unconventional receptors composed of IL12RB2 and gp130/IL6ST heterodimers or homodimers. Signaling requires the transcription factors STAT1 and STAT4, which form a unique heterodimer that binds to distinct DNA sites. This is Interleukin-12 subunit alpha (Il12a) from Rattus norvegicus (Rat).